The sequence spans 245 residues: Derlin-1 (245 aa).

Over 1 to 5 the chain is Cytoplasmic; that stretch reads MDLEN. The helical transmembrane segment at 6–26 threads the bilayer; that stretch reads FLLGIPIVTRYWFLASTIIPL. Residues 27 to 57 lie on the Lumenal side of the membrane; sequence LGRFGFINVQWMFLQWDLVVNKFQFWRPLTA. Residues 58–78 form a helical membrane-spanning segment; that stretch reads LIYYPVTPQTGFHWLMMCYFL. Residues 79-100 are Cytoplasmic-facing; that stretch reads YNYSKALESETYRGRSADYLFM. A helical membrane pass occupies residues 101–121; that stretch reads LIFNWFFCSGLCMALDIYFLL. Residues 122–166 are Lumenal-facing; that stretch reads EPMVISVLYVWCQVNKDTIVSFWFGMRFPARYLPWVLWGFNAVLR. A helical transmembrane segment spans residues 167–187; the sequence is GGGTNELVGILVGHAYFFVAL. The Cytoplasmic segment spans residues 188–245; it reads KYPDEYGVDLISTPEFLHRLIPDEDGGIHGQDGNIRGARQQPRGHQWPGGVGARLGGN. The interval 218 to 245 is disordered; the sequence is QDGNIRGARQQPRGHQWPGGVGARLGGN. The span at 234 to 245 shows a compositional bias: gly residues; the sequence is WPGGVGARLGGN.

This sequence belongs to the derlin family.

The protein resides in the endoplasmic reticulum membrane. In terms of biological role, specifically required for the degradation process of misfolded endoplasmic reticulum (ER) luminal proteins. Participates in the transfer of misfolded proteins from the ER to the cytosol, where they are destroyed by the proteasome in a ubiquitin-dependent manner. This chain is Derlin-1, found in Caenorhabditis elegans.